We begin with the raw amino-acid sequence, 492 residues long: Beta-Ala-His dipeptidase (492 aa).

His107 contributes to the Zn(2+) binding site. Residue Asp109 is part of the active site. Residue Asp140 participates in Zn(2+) binding. Residue Glu174 is the Proton acceptor of the active site. Residue Glu175 coordinates Zn(2+). Phosphoserine is present on Ser194. Zn(2+) is bound by residues Asp203 and His453.

Belongs to the peptidase M20A family. In terms of assembly, homodimer. The cofactor is Zn(2+). Detected exclusively in kidney.

The protein localises to the secreted. It catalyses the reaction Preferential hydrolysis of the beta-Ala-|-His dipeptide (carnosine), and also anserine, Xaa-|-His dipeptides and other dipeptides including homocarnosine.. It carries out the reaction carnosine + H2O = beta-alanine + L-histidine. The catalysed reaction is anserine + H2O = N(pros)-methyl-L-histidine + beta-alanine. The enzyme catalyses L-alanyl-L-histidine + H2O = L-histidine + L-alanine. It catalyses the reaction glycyl-L-histidine + H2O = L-histidine + glycine. It carries out the reaction L-homocarnosine + H2O = 4-aminobutanoate + L-histidine. Its function is as follows. Catalyzes the peptide bond hydrolysis in Xaa-His dipeptides, displaying the highest activity toward carnosine (beta-alanyl-L-histidine) and anserine (beta-alanyl-3-methyl-histidine). This chain is Beta-Ala-His dipeptidase (Cndp1), found in Mus musculus (Mouse).